A 2641-amino-acid chain; its full sequence is Inverse autotransporter adhesin YeeJ (2641 aa).

The signal sequence occupies residues 1 to 25 (MGIKLRRLTAGICLITQLVFPMAAA). In terms of domain architecture, LysM spans 50–98 (VPYTLGALESAQSVAERFGISVAELRKLNQFRTFARGFDNVRQGDELDV). Positions 125–400 (TSQQIGSLLA…SRFDLVDRNN (276 aa)) are inverse autotransporter. An invasin 3 domain region spans residues 513–605 (QKDSSVSLSS…GVDAAKAPAV (93 aa)). 17 consecutive Big-1 domains span residues 617–711 (HSSI…AGFI), 721–815 (IATL…VSFV), 822–913 (QVDL…VIFI), 920–1017 (ALTL…MTFV), 1024–1116 (VVVL…VNIA), 1123–1220 (QVTL…VTFV), 1227–1319 (VVVL…VNIA), 1326–1423 (QVTL…VTFV), 1430–1523 (LVVL…VHFI), 1531–1633 (IIEL…SINV), 1641–1734 (HLTL…VTYV), 1741–1837 (EISL…VNFI), 1844–1941 (QVNL…VTLI), 1948–2032 (KLAS…PTEV), 2048–2141 (ITSL…VIDQ), 2142–2235 (KLTL…IVKV), and 2244–2336 (VASF…ITLV). A C-type lectin domain region spans residues 2538 to 2641 (KSWWVNAGDA…FAYATCYKNL (104 aa)).

Belongs to the intimin/invasin family.

The protein resides in the cell outer membrane. In terms of biological role, a probable inverse autotransporter, it may be involved in biofilm formation and cell adhesion. May bind peptidoglycan via its LysM domain. The sequence is that of Inverse autotransporter adhesin YeeJ (yeeJ) from Escherichia coli O157:H7.